The primary structure comprises 329 residues: Cysteine synthase (329 aa).

Lys48 bears the N6-(pyridoxal phosphate)lysine mark. Pyridoxal 5'-phosphate-binding positions include Asn78, 183–187 (GTGGT), and Ser278.

The protein belongs to the cysteine synthase/cystathionine beta-synthase family. As to quaternary structure, homodimer. Pyridoxal 5'-phosphate serves as cofactor.

The catalysed reaction is O-acetyl-L-serine + hydrogen sulfide = L-cysteine + acetate. It functions in the pathway amino-acid biosynthesis; L-cysteine biosynthesis; L-cysteine from L-serine: step 2/2. Functionally, catalyzes the conversion of O-acetylserine (OAS) to cysteine through the elimination of acetate and addition of hydrogen sulfide. This is Cysteine synthase (srpG) from Synechococcus elongatus (strain ATCC 33912 / PCC 7942 / FACHB-805) (Anacystis nidulans R2).